A 239-amino-acid polypeptide reads, in one-letter code: Peroxygenase (239 aa).

Residue glycine 2 is modified to N-acetylglycine. One can recognise an EF-hand domain in the interval 60-95 (HNMSVLQQRAAFFDRNNDGIVYPWETYQGFRAVGFG). Positions 73, 75, 77, and 84 each coordinate Ca(2+). Residues 116–125 (PSWIPSPVLS) carry the Proline-knot motif.

The protein belongs to the caleosin family. In terms of assembly, homodimer. Heme b serves as cofactor. It depends on Ca(2+) as a cofactor. In terms of tissue distribution, expressed in pollen (at protein level). Not expressed in leaf, root, stem, tepal, ovary, style, filament or stigma (at protein level).

Its subcellular location is the lipid droplet. The protein localises to the microsome membrane. It catalyses the reaction RH + ROOH = ROH + ROH.. Calcium-binding peroxygenase involved in the degradation of storage lipid in oil bodies. The sequence is that of Peroxygenase from Lilium longiflorum (Trumpet lily).